Here is a 327-residue protein sequence, read N- to C-terminus: Methionyl-tRNA formyltransferase (327 aa).

121–124 (SLLP) contributes to the (6S)-5,6,7,8-tetrahydrofolate binding site.

The protein belongs to the Fmt family.

It carries out the reaction L-methionyl-tRNA(fMet) + (6R)-10-formyltetrahydrofolate = N-formyl-L-methionyl-tRNA(fMet) + (6S)-5,6,7,8-tetrahydrofolate + H(+). Attaches a formyl group to the free amino group of methionyl-tRNA(fMet). The formyl group appears to play a dual role in the initiator identity of N-formylmethionyl-tRNA by promoting its recognition by IF2 and preventing the misappropriation of this tRNA by the elongation apparatus. The sequence is that of Methionyl-tRNA formyltransferase from Burkholderia pseudomallei (strain 1710b).